Reading from the N-terminus, the 659-residue chain is Biosynthetic arginine decarboxylase 2 (659 aa).

Lys-119 carries the post-translational modification N6-(pyridoxal phosphate)lysine. 311 to 321 lines the substrate pocket; that stretch reads LNVGGGLAVDY.

It belongs to the Orn/Lys/Arg decarboxylase class-II family. SpeA subfamily. The cofactor is Mg(2+). It depends on pyridoxal 5'-phosphate as a cofactor.

It catalyses the reaction L-arginine + H(+) = agmatine + CO2. In terms of biological role, catalyzes the biosynthesis of agmatine from arginine. This Synechocystis sp. (strain ATCC 27184 / PCC 6803 / Kazusa) protein is Biosynthetic arginine decarboxylase 2 (speA2).